Consider the following 37-residue polypeptide: Large ribosomal subunit protein bL36 (37 aa).

It belongs to the bacterial ribosomal protein bL36 family.

This Geobacter sp. (strain M21) protein is Large ribosomal subunit protein bL36.